The primary structure comprises 449 residues: tRNA (guanine(37)-N(1))-methyltransferase (449 aa).

Residues histidine 216, 254-255 (DL), 282-283 (DG), and asparagine 345 contribute to the S-adenosyl-L-methionine site.

It belongs to the class I-like SAM-binding methyltransferase superfamily. TRM5/TYW2 family. In terms of assembly, monomer.

The protein resides in the mitochondrion matrix. Its subcellular location is the nucleus. It localises to the cytoplasm. The enzyme catalyses guanosine(37) in tRNA + S-adenosyl-L-methionine = N(1)-methylguanosine(37) in tRNA + S-adenosyl-L-homocysteine + H(+). In terms of biological role, specifically methylates the N1 position of guanosine-37 in various cytoplasmic and mitochondrial tRNAs. Methylation is not dependent on the nature of the nucleoside 5' of the target nucleoside. This is the first step in the biosynthesis of wybutosine (yW), a modified base adjacent to the anticodon of tRNAs and required for accurate decoding. The protein is tRNA (guanine(37)-N(1))-methyltransferase of Candida albicans (strain WO-1) (Yeast).